The chain runs to 181 residues: UPF0302 protein ABC1905 (181 aa).

The protein belongs to the UPF0302 family.

The sequence is that of UPF0302 protein ABC1905 from Shouchella clausii (strain KSM-K16) (Alkalihalobacillus clausii).